Here is a 70-residue protein sequence, read N- to C-terminus: Protein SlyX homolog (70 aa).

This sequence belongs to the SlyX family.

The protein is Protein SlyX homolog of Shewanella putrefaciens (strain CN-32 / ATCC BAA-453).